The following is a 286-amino-acid chain: Bifunctional protein FolD (286 aa).

Residues 164–166, S193, and I234 contribute to the NADP(+) site; that span reads GRS.

It belongs to the tetrahydrofolate dehydrogenase/cyclohydrolase family. In terms of assembly, homodimer.

It catalyses the reaction (6R)-5,10-methylene-5,6,7,8-tetrahydrofolate + NADP(+) = (6R)-5,10-methenyltetrahydrofolate + NADPH. The catalysed reaction is (6R)-5,10-methenyltetrahydrofolate + H2O = (6R)-10-formyltetrahydrofolate + H(+). It participates in one-carbon metabolism; tetrahydrofolate interconversion. Functionally, catalyzes the oxidation of 5,10-methylenetetrahydrofolate to 5,10-methenyltetrahydrofolate and then the hydrolysis of 5,10-methenyltetrahydrofolate to 10-formyltetrahydrofolate. This Oleidesulfovibrio alaskensis (strain ATCC BAA-1058 / DSM 17464 / G20) (Desulfovibrio alaskensis) protein is Bifunctional protein FolD.